A 196-amino-acid polypeptide reads, in one-letter code: Probable malonic semialdehyde reductase RutE (196 aa).

Belongs to the nitroreductase family. HadB/RutE subfamily. FMN serves as cofactor.

It carries out the reaction 3-hydroxypropanoate + NADP(+) = 3-oxopropanoate + NADPH + H(+). May reduce toxic product malonic semialdehyde to 3-hydroxypropionic acid, which is excreted. The protein is Probable malonic semialdehyde reductase RutE of Klebsiella pneumoniae subsp. pneumoniae (strain ATCC 700721 / MGH 78578).